Consider the following 312-residue polypeptide: Methionyl-tRNA formyltransferase (312 aa).

(6S)-5,6,7,8-tetrahydrofolate is bound at residue 112 to 115 (SLLP).

Belongs to the Fmt family.

It carries out the reaction L-methionyl-tRNA(fMet) + (6R)-10-formyltetrahydrofolate = N-formyl-L-methionyl-tRNA(fMet) + (6S)-5,6,7,8-tetrahydrofolate + H(+). Its function is as follows. Attaches a formyl group to the free amino group of methionyl-tRNA(fMet). The formyl group appears to play a dual role in the initiator identity of N-formylmethionyl-tRNA by promoting its recognition by IF2 and preventing the misappropriation of this tRNA by the elongation apparatus. This Magnetococcus marinus (strain ATCC BAA-1437 / JCM 17883 / MC-1) protein is Methionyl-tRNA formyltransferase.